The sequence spans 617 residues: Tetratricopeptide repeat protein 39B (617 aa).

3 TPR repeats span residues 328 to 361 (SLIL…QEEW), 520 to 553 (CLVK…EKLL), and 561 to 594 (PFTL…YKDY).

It belongs to the TTC39 family. High expression in lung and spleen. Low lower expression in liver and small intestine. Weak expression in heart, brain, kidney, adipose, and adrenal gland.

Functionally, regulates high density lipoprotein (HDL) cholesterol metabolism by promoting the ubiquitination and degradation of the oxysterols receptors LXR (NR1H2 and NR1H3). This chain is Tetratricopeptide repeat protein 39B, found in Mus musculus (Mouse).